Reading from the N-terminus, the 316-residue chain is Transaldolase (316 aa).

Lys-126 serves as the catalytic Schiff-base intermediate with substrate.

It belongs to the transaldolase family. Type 1 subfamily. Homodimer.

It is found in the cytoplasm. It carries out the reaction D-sedoheptulose 7-phosphate + D-glyceraldehyde 3-phosphate = D-erythrose 4-phosphate + beta-D-fructose 6-phosphate. It participates in carbohydrate degradation; pentose phosphate pathway; D-glyceraldehyde 3-phosphate and beta-D-fructose 6-phosphate from D-ribose 5-phosphate and D-xylulose 5-phosphate (non-oxidative stage): step 2/3. Functionally, transaldolase is important for the balance of metabolites in the pentose-phosphate pathway. This is Transaldolase from Methylibium petroleiphilum (strain ATCC BAA-1232 / LMG 22953 / PM1).